A 35-amino-acid chain; its full sequence is uncharacterized protein (35 aa).

Residues 10–30 form a helical membrane-spanning segment; the sequence is LMITASFFAIFIIIVVSVLLL.

The protein localises to the membrane. This is an uncharacterized protein from Salmonella paratyphi A (strain ATCC 9150 / SARB42).